Consider the following 387-residue polypeptide: Cysteine desulfurase IscS (387 aa).

Pyridoxal 5'-phosphate contacts are provided by residues 73–74, asparagine 155, glutamine 183, and 203–205; these read AT and SAH. Lysine 206 carries the N6-(pyridoxal phosphate)lysine modification. Pyridoxal 5'-phosphate is bound at residue threonine 241. Cysteine 328 (cysteine persulfide intermediate) is an active-site residue. Cysteine 328 is a binding site for [2Fe-2S] cluster.

This sequence belongs to the class-V pyridoxal-phosphate-dependent aminotransferase family. NifS/IscS subfamily. In terms of assembly, homodimer. Forms a heterotetramer with IscU, interacts with other sulfur acceptors. Requires pyridoxal 5'-phosphate as cofactor.

The protein localises to the cytoplasm. The enzyme catalyses (sulfur carrier)-H + L-cysteine = (sulfur carrier)-SH + L-alanine. Its pathway is cofactor biosynthesis; iron-sulfur cluster biosynthesis. Master enzyme that delivers sulfur to a number of partners involved in Fe-S cluster assembly, tRNA modification or cofactor biosynthesis. Catalyzes the removal of elemental sulfur atoms from cysteine to produce alanine. Functions as a sulfur delivery protein for Fe-S cluster synthesis onto IscU, an Fe-S scaffold assembly protein, as well as other S acceptor proteins. This Helicobacter pylori (strain P12) protein is Cysteine desulfurase IscS.